A 109-amino-acid chain; its full sequence is Phosphoribosyl-ATP pyrophosphatase (109 aa).

The protein belongs to the PRA-PH family.

Its subcellular location is the cytoplasm. The enzyme catalyses 1-(5-phospho-beta-D-ribosyl)-ATP + H2O = 1-(5-phospho-beta-D-ribosyl)-5'-AMP + diphosphate + H(+). The protein operates within amino-acid biosynthesis; L-histidine biosynthesis; L-histidine from 5-phospho-alpha-D-ribose 1-diphosphate: step 2/9. This chain is Phosphoribosyl-ATP pyrophosphatase, found in Paramagnetospirillum magneticum (strain ATCC 700264 / AMB-1) (Magnetospirillum magneticum).